Consider the following 360-residue polypeptide: Photosystem II protein D1 1 (360 aa).

3 helical membrane passes run 29-46 (YVGWFGVLMIPTLLSATI), 118-133 (HFLIGVFCYLGREWEL), and 142-156 (WICIAYSAPVAAAAA). Chlorophyll a is bound at residue His118. Pheophytin a is bound at residue Tyr126. The [CaMn4O5] cluster site is built by Asp170 and Glu189. The chain crosses the membrane as a helical span at residues 197-218 (FHMLGVAGVFGGSLFSAMHGSL). A chlorophyll a-binding site is contributed by His198. Residues His215 and 264–265 (SF) each bind a quinone. His215 contacts Fe cation. Residue His272 participates in Fe cation binding. Residues 274 to 288 (FLAAWPVIGIWFTAL) form a helical membrane-spanning segment. [CaMn4O5] cluster contacts are provided by His332, Glu333, Asp342, and Ala344. A propeptide spanning residues 345–360 (GTESAPVAVGNADLNG) is cleaved from the precursor.

The protein belongs to the reaction center PufL/M/PsbA/D family. As to quaternary structure, PSII is composed of 1 copy each of membrane proteins PsbA, PsbB, PsbC, PsbD, PsbE, PsbF, PsbH, PsbI, PsbJ, PsbK, PsbL, PsbM, PsbT, PsbX, Psb30/Ycf12, peripheral proteins PsbO, CyanoQ (PsbQ), PsbU, PsbV and a large number of cofactors. It forms dimeric complexes. The D1/D2 heterodimer binds P680, chlorophylls that are the primary electron donor of PSII, and subsequent electron acceptors. It shares a non-heme iron and each subunit binds pheophytin, quinone, additional chlorophylls, carotenoids and lipids. D1 provides most of the ligands for the Mn4-Ca-O5 cluster of the oxygen-evolving complex (OEC). There is also a Cl(-1) ion associated with D1 and D2, which is required for oxygen evolution. The PSII complex binds additional chlorophylls, carotenoids and specific lipids. serves as cofactor. In terms of processing, tyr-161 forms a radical intermediate that is referred to as redox-active TyrZ, YZ or Y-Z. C-terminally processed by CtpA; processing is essential to allow assembly of the oxygen-evolving complex and thus photosynthetic growth.

Its subcellular location is the cell inner membrane. It catalyses the reaction 2 a plastoquinone + 4 hnu + 2 H2O = 2 a plastoquinol + O2. Photosystem II (PSII) is a light-driven water:plastoquinone oxidoreductase that uses light energy to abstract electrons from H(2)O, generating O(2) and a proton gradient subsequently used for ATP formation. It consists of a core antenna complex that captures photons, and an electron transfer chain that converts photonic excitation into a charge separation. The D1/D2 (PsbA/PsbD) reaction center heterodimer binds P680, the primary electron donor of PSII as well as several subsequent electron acceptors. The protein is Photosystem II protein D1 1 of Gloeobacter violaceus (strain ATCC 29082 / PCC 7421).